The primary structure comprises 131 residues: Small ribosomal subunit protein uS8 (131 aa).

It belongs to the universal ribosomal protein uS8 family. Part of the 30S ribosomal subunit. Contacts proteins S5 and S12.

Its function is as follows. One of the primary rRNA binding proteins, it binds directly to 16S rRNA central domain where it helps coordinate assembly of the platform of the 30S subunit. The sequence is that of Small ribosomal subunit protein uS8 from Burkholderia multivorans (strain ATCC 17616 / 249).